A 185-amino-acid polypeptide reads, in one-letter code: Large ribosomal subunit protein uL16m (185 aa).

It belongs to the universal ribosomal protein uL16 family.

It is found in the mitochondrion. This is Large ribosomal subunit protein uL16m (RPL16) from Oryza sativa subsp. japonica (Rice).